Here is a 345-residue protein sequence, read N- to C-terminus: Anthranilate phosphoribosyltransferase (345 aa).

5-phospho-alpha-D-ribose 1-diphosphate-binding positions include Gly79, 82 to 83 (GD), Thr87, 89 to 92 (NVST), 106 to 114 (KHGNRAVSG), and Ser118. An anthranilate-binding site is contributed by Gly79. Residue Ser91 coordinates Mg(2+). Residue Asn109 coordinates anthranilate. Residue Arg164 coordinates anthranilate. Asp223 and Glu224 together coordinate Mg(2+).

It belongs to the anthranilate phosphoribosyltransferase family. As to quaternary structure, homodimer. Requires Mg(2+) as cofactor.

It carries out the reaction N-(5-phospho-beta-D-ribosyl)anthranilate + diphosphate = 5-phospho-alpha-D-ribose 1-diphosphate + anthranilate. Its pathway is amino-acid biosynthesis; L-tryptophan biosynthesis; L-tryptophan from chorismate: step 2/5. Catalyzes the transfer of the phosphoribosyl group of 5-phosphorylribose-1-pyrophosphate (PRPP) to anthranilate to yield N-(5'-phosphoribosyl)-anthranilate (PRA). This Saccharolobus islandicus (strain M.16.27) (Sulfolobus islandicus) protein is Anthranilate phosphoribosyltransferase.